The chain runs to 551 residues: Glucan 1,4-alpha-maltotetraohydrolase (551 aa).

Residues 1–21 (MSHILRAAVLAAVLLPFPALA) form the signal peptide. Asp-22, Gln-23, His-34, Asp-37, and Glu-38 together coordinate Ca(2+). 99 to 100 (YF) contacts substrate. Asn-137 contributes to the Ca(2+) binding site. Substrate is bound at residue His-138. Cys-161 and Cys-171 are disulfide-bonded. Asp-172 and Asp-175 together coordinate Ca(2+). Position 177–181 (177–181 (FIGGE)) interacts with substrate. Asp-183 serves as a coordination point for Ca(2+). Arg-212 is a binding site for substrate. The active-site Nucleophile is the Asp-214. Gly-218 contacts Ca(2+). Cysteines 237 and 272 form a disulfide. The active-site Proton donor is the Glu-240. Residues His-314 and Gln-326 each coordinate substrate. Positions 449–551 (GGEGGLVNVN…AAGASTSGSF (103 aa)) constitute a CBM20 domain.

The protein belongs to the glycosyl hydrolase 13 family. In terms of assembly, monomer. It depends on Ca(2+) as a cofactor.

It localises to the secreted. It catalyses the reaction Hydrolysis of (1-&gt;4)-alpha-D-glucosidic linkages in amylaceous polysaccharides, to remove successive maltotetraose residues from the non-reducing chain ends.. It functions in the pathway glycan degradation; starch degradation. The chain is Glucan 1,4-alpha-maltotetraohydrolase (mta) from Roseateles saccharophilus (Pseudomonas saccharophila).